Reading from the N-terminus, the 1153-residue chain is uncharacterized protein (1153 aa).

The N-terminal stretch at 1-18 (MNKNIFITLLISLLLLSG) is a signal peptide. The N-palmitoyl cysteine moiety is linked to residue C19. C19 is lipidated: S-diacylglycerol cysteine. 4 helical membrane-spanning segments follow: residues 289–309 (VSAI…IGNI), 393–413 (LGFI…FLIF), 422–442 (ALIT…FMLF), and 457–477 (ISYA…SMII).

This sequence belongs to the TrbL/VirB6 family.

It localises to the cell membrane. This is an uncharacterized protein from Rickettsia conorii (strain ATCC VR-613 / Malish 7).